A 239-amino-acid chain; its full sequence is Ribonuclease 3 (239 aa).

Positions 18–141 (YTTLEKALGY…LMAGVYLEAG (124 aa)) constitute an RNase III domain. Glu-54 is a Mg(2+) binding site. Asp-58 is an active-site residue. Residues Ser-127 and Glu-130 each coordinate Mg(2+). Residue Glu-130 is part of the active site. The 70-residue stretch at 168 to 237 (DYKTALQELT…AYYALQKLKE (70 aa)) folds into the DRBM domain.

This sequence belongs to the ribonuclease III family. As to quaternary structure, homodimer. The cofactor is Mg(2+).

Its subcellular location is the cytoplasm. It catalyses the reaction Endonucleolytic cleavage to 5'-phosphomonoester.. Digests double-stranded RNA. Involved in the processing of primary rRNA transcript to yield the immediate precursors to the large and small rRNAs (23S and 16S). Processes some mRNAs, and tRNAs when they are encoded in the rRNA operon. Processes pre-crRNA and tracrRNA of type II CRISPR loci if present in the organism. In Helicobacter pylori (strain G27), this protein is Ribonuclease 3.